Reading from the N-terminus, the 235-residue chain is Large ribosomal subunit protein uL1 (235 aa).

It belongs to the universal ribosomal protein uL1 family. In terms of assembly, part of the 50S ribosomal subunit.

Binds directly to 23S rRNA. The L1 stalk is quite mobile in the ribosome, and is involved in E site tRNA release. In terms of biological role, protein L1 is also a translational repressor protein, it controls the translation of the L11 operon by binding to its mRNA. The polypeptide is Large ribosomal subunit protein uL1 (Symbiobacterium thermophilum (strain DSM 24528 / JCM 14929 / IAM 14863 / T)).